We begin with the raw amino-acid sequence, 142 residues long: HTH-type transcriptional regulator LrpA1 (142 aa).

One can recognise an HTH asnC-type domain in the interval 1-72; sequence MSTESTEERI…GQSIAMVGID (72 aa). The H-T-H motif DNA-binding region spans 22–41; sequence YAAIAERADVSKPTVRKYID.

In terms of biological role, transcription factor that regulates genes involved in amino acid metabolism. Represses the aspB3 gene, coding for an aspartate transaminase, in the presence of L-aspartate. Another target gene is the basal transcriptional regulator tfbB. Also binds its own promoter. In Halobacterium salinarum (strain ATCC 29341 / DSM 671 / R1), this protein is HTH-type transcriptional regulator LrpA1 (lrpA1).